The sequence spans 488 residues: 1-deoxy-D-xylulose 5-phosphate reductoisomerase, apicoplastic (488 aa).

Residues 1–72 (MKKYIYIYFF…LCKKDLIDIG (72 aa)) constitute an apicoplast transit peptide. NADP(+) contacts are provided by residues 86–89 (TGSI) and 115–117 (NKS). Residue K205 participates in 1-deoxy-D-xylulose 5-phosphate binding. E206 lines the NADP(+) pocket. D231 lines the Mn(2+) pocket. 1-deoxy-D-xylulose 5-phosphate is bound by residues S232, E233, S270, and H293. E233 serves as a coordination point for Mn(2+). An NADP(+)-binding site is contributed by G299. Residues S306, N311, K312, and E315 each contribute to the 1-deoxy-D-xylulose 5-phosphate site. E315 is a Mn(2+) binding site.

Belongs to the DXR family. As to quaternary structure, homodimer. Mg(2+) serves as cofactor. It depends on Mn(2+) as a cofactor.

The protein resides in the plastid. The protein localises to the apicoplast. It catalyses the reaction 2-C-methyl-D-erythritol 4-phosphate + NADP(+) = 1-deoxy-D-xylulose 5-phosphate + NADPH + H(+). It functions in the pathway isoprenoid biosynthesis; isopentenyl diphosphate biosynthesis via DXP pathway; isopentenyl diphosphate from 1-deoxy-D-xylulose 5-phosphate: step 1/6. Its activity is regulated as follows. Inhibited by fosmidomycin and its derivatives. In terms of biological role, catalyzes the NADPH-dependent rearrangement and reduction of 1-deoxy-D-xylulose-5-phosphate (DXP) to 2-C-methyl-D-erythritol 4-phosphate (MEP). The polypeptide is 1-deoxy-D-xylulose 5-phosphate reductoisomerase, apicoplastic (DXR) (Plasmodium falciparum (isolate 3D7)).